A 337-amino-acid chain; its full sequence is Heat-inducible transcription repressor HrcA (337 aa).

It belongs to the HrcA family.

In terms of biological role, negative regulator of class I heat shock genes (grpE-dnaK-dnaJ and groELS operons). Prevents heat-shock induction of these operons. The polypeptide is Heat-inducible transcription repressor HrcA (Kocuria rhizophila (strain ATCC 9341 / DSM 348 / NBRC 103217 / DC2201)).